The following is a 67-amino-acid chain: UPF0253 protein VS_2370 (67 aa).

Belongs to the UPF0253 family.

The chain is UPF0253 protein VS_2370 from Vibrio atlanticus (strain LGP32) (Vibrio splendidus (strain Mel32)).